The chain runs to 274 residues: Large ribosomal subunit protein uL2cz/uL2cy (274 aa).

Disordered stretches follow at residues 1–25 and 224–274; these read MAIH…VKSN and NPVD…RRSK.

Belongs to the universal ribosomal protein uL2 family. As to quaternary structure, part of the 50S ribosomal subunit.

Its subcellular location is the plastid. It is found in the chloroplast. This chain is Large ribosomal subunit protein uL2cz/uL2cy (rpl2-A), found in Cucumis sativus (Cucumber).